The primary structure comprises 757 residues: RNA-directed RNA polymerase catalytic subunit (757 aa).

The interval Ser50–Tyr82 is disordered. Over residues Trp55 to Pro64 the composition is skewed to polar residues. 2 consecutive short sequence motifs (nuclear localization signal) follow at residues Arg187–Met195 and Arg203–Ser216. The promoter-binding site stretch occupies residues Arg249–Glu256. Residues Val286 to Tyr483 form the RdRp catalytic domain.

The protein belongs to the influenza viruses polymerase PB1 family. In terms of assembly, influenza RNA polymerase is composed of three subunits: PB1, PB2 and PA. Interacts (via N-terminus) with PA (via C-terminus). Interacts (via C-terminus) with PB2 (via N-terminus); this interaction is essential for transcription initiation. Post-translationally, phosphorylated by host PRKCA.

Its subcellular location is the host nucleus. It localises to the host cytoplasm. It carries out the reaction RNA(n) + a ribonucleoside 5'-triphosphate = RNA(n+1) + diphosphate. In terms of biological role, RNA-dependent RNA polymerase which is responsible for replication and transcription of virus RNA segments. The transcription of viral mRNAs occurs by a unique mechanism called cap-snatching. 5' methylated caps of cellular mRNAs are cleaved after 10-13 nucleotides by PA. In turn, these short capped RNAs are used as primers by PB1 for transcription of viral mRNAs. During virus replication, PB1 initiates RNA synthesis and copy vRNA into complementary RNA (cRNA) which in turn serves as a template for the production of more vRNAs. This Influenza A virus (strain A/Port Chalmers/1/1973 H3N2) protein is RNA-directed RNA polymerase catalytic subunit.